We begin with the raw amino-acid sequence, 354 residues long: 3-isopropylmalate dehydrogenase (354 aa).

Position 76 to 87 (76 to 87 (GPRWDGAKERPE)) interacts with NAD(+). Substrate-binding residues include Arg-94, Arg-104, Arg-130, and Asp-215. Mg(2+)-binding residues include Asp-215, Asp-239, and Asp-243. Position 273–285 (273–285 (GSAPDIAGKNKAN)) interacts with NAD(+).

This sequence belongs to the isocitrate and isopropylmalate dehydrogenases family. LeuB type 1 subfamily. As to quaternary structure, homodimer. Mg(2+) serves as cofactor. Requires Mn(2+) as cofactor.

The protein localises to the cytoplasm. It catalyses the reaction (2R,3S)-3-isopropylmalate + NAD(+) = 4-methyl-2-oxopentanoate + CO2 + NADH. The protein operates within amino-acid biosynthesis; L-leucine biosynthesis; L-leucine from 3-methyl-2-oxobutanoate: step 3/4. Its function is as follows. Catalyzes the oxidation of 3-carboxy-2-hydroxy-4-methylpentanoate (3-isopropylmalate) to 3-carboxy-4-methyl-2-oxopentanoate. The product decarboxylates to 4-methyl-2 oxopentanoate. The sequence is that of 3-isopropylmalate dehydrogenase from Bacillus anthracis.